The primary structure comprises 40 residues: Beta-defensin 1 (40 aa).

Cystine bridges form between cysteine 7-cysteine 35, cysteine 14-cysteine 29, and cysteine 19-cysteine 36. At glycine 40 the chain carries Glycine amide.

In terms of assembly, monomer. Homodimer.

The protein localises to the secreted. It localises to the membrane. Its function is as follows. Has antimicrobial activity against the Gram-positive bacteria methicillin-resistant S.aureus ATCC 33591 and L.monocytogenes EGD, the Gram-negative bacterium E.coli ML53p and the yeast C.albicans 820. Has no hemolytic activity towards human erythrocytes. This Emys orbicularis (European pond turtle) protein is Beta-defensin 1.